An 84-amino-acid polypeptide reads, in one-letter code: Dolichol phosphate-mannose biosynthesis regulatory protein (84 aa).

2 helical membrane-spanning segments follow: residues 11 to 31 (LGLV…VILL) and 49 to 69 (YAIA…GIFI).

This sequence belongs to the DPM2 family. Component of the dolichol-phosphate mannose (DPM) synthase complex composed of DPM1, DPM2 and DPM3; in the complex interacts directly with DPM3. Component of the glycosylphosphatidylinositol-N-acetylglucosaminyltransferase (GPI-GnT) complex composed at least by PIGA, PIGC, PIGH, PIGP, PIGQ, PIGY and DPM2. Interacts with PIGA, PIGC and PIGQ.

The protein resides in the endoplasmic reticulum membrane. The protein operates within protein modification; protein glycosylation. Functionally, regulates the biosynthesis of dolichol phosphate-mannose. Regulatory subunit of the dolichol-phosphate mannose (DPM) synthase complex; essential for the ER localization and stable expression of DPM1. Part of the glycosylphosphatidylinositol-N-acetylglucosaminyltransferase (GPI-GnT) complex that catalyzes the transfer of N-acetylglucosamine from UDP-N-acetylglucosamine to phosphatidylinositol and participates in the first step of GPI biosynthesis. May act by regulating the GPI-GNT complex. This Bos taurus (Bovine) protein is Dolichol phosphate-mannose biosynthesis regulatory protein.